A 2531-amino-acid polypeptide reads, in one-letter code: Serine/threonine-protein kinase ATR (2531 aa).

Positions 1490-2067 (LIVKVAETFG…MWQSAYLLRQ (578 aa)) constitute an FAT domain. Residues 2192–2512 (FSDKVKVLHS…VSQLASSLIE (321 aa)) form the PI3K/PI4K catalytic domain. A G-loop region spans residues 2198-2204 (VLHSNTK). The tract at residues 2368–2376 (GLGDRHTKN) is catalytic loop. Residues 2387–2411 (HVDFDMIFNKGETLGTPELVPFRLT) form an activation loop region. The FATC domain maps to 2499–2531 (HPMQVSQLASSLIELATSEEKLSEMYLGWMATL).

Belongs to the PI3/PI4-kinase family. ATM subfamily. Mn(2+) serves as cofactor.

It localises to the nucleus. The enzyme catalyses L-seryl-[protein] + ATP = O-phospho-L-seryl-[protein] + ADP + H(+). The catalysed reaction is L-threonyl-[protein] + ATP = O-phospho-L-threonyl-[protein] + ADP + H(+). Its function is as follows. Serine/threonine protein kinase which activates checkpoint signaling upon genotoxic stresses such as ionizing radiation (IR), ultraviolet light (UV), or DNA replication stalling, thereby acting as a DNA damage sensor. Recognizes the substrate consensus sequence [ST]-Q. Phosphorylates various proteins, which collectively inhibits DNA replication and mitosis and promotes DNA repair and recombination. Prevents mitotic catastrophe by functioning in the S-phase checkpoint and cooperating with atm-1 in the checkpoint response to double-strand breaks (DSBs) after ionizing radiation (IR) to induce cell cycle arrest or apoptosis via the cep-1/p53 pathway. In response to ionizing radiation, probably required for the association between the brc-1-brd-1 heterodimer and rad-51 and let-70 in order to activate E3-ubiquitin ligase activity of the heterodimer and induce ubiquitination at DNA damage sites. This Caenorhabditis elegans protein is Serine/threonine-protein kinase ATR.